We begin with the raw amino-acid sequence, 226 residues long: UPF0173 metal-dependent hydrolase CTN_1413 (226 aa).

This sequence belongs to the UPF0173 family.

The protein is UPF0173 metal-dependent hydrolase CTN_1413 of Thermotoga neapolitana (strain ATCC 49049 / DSM 4359 / NBRC 107923 / NS-E).